A 622-amino-acid chain; its full sequence is 1,4-alpha-glucan branching enzyme GlgB (622 aa).

Catalysis depends on D300, which acts as the Nucleophile. Catalysis depends on E351, which acts as the Proton donor.

Belongs to the glycosyl hydrolase 13 family. GlgB subfamily. In terms of assembly, monomer.

The catalysed reaction is Transfers a segment of a (1-&gt;4)-alpha-D-glucan chain to a primary hydroxy group in a similar glucan chain.. It participates in glycan biosynthesis; glycogen biosynthesis. Its function is as follows. Catalyzes the formation of the alpha-1,6-glucosidic linkages in glycogen by scission of a 1,4-alpha-linked oligosaccharide from growing alpha-1,4-glucan chains and the subsequent attachment of the oligosaccharide to the alpha-1,6 position. The protein is 1,4-alpha-glucan branching enzyme GlgB of Streptococcus agalactiae serotype III (strain NEM316).